Reading from the N-terminus, the 21-residue chain is Venom nerve growth factor Bco12 (21 aa).

This sequence belongs to the NGF-beta family. Homodimer; non-covalently linked. Glycosylated. Expressed by the venom gland.

The protein localises to the secreted. Nerve growth factor is important for the development and maintenance of the sympathetic and sensory nervous systems. It stimulates division and differentiation of sympathetic and embryonic sensory neurons as well as basal forebrain cholinergic neurons in the brain. Its relevance in the snake venom is not clear. However, it has been shown to inhibit metalloproteinase-dependent proteolysis of platelet glycoprotein Ib alpha, suggesting a metalloproteinase inhibition to prevent metalloprotease autodigestion and/or protection against prey proteases. Binds a lipid between the two protein chains in the homodimer. The lipid-bound form promotes histamine relase from mouse mast cells, contrary to the lipid-free form. In Bothrops cotiara (Cotiara), this protein is Venom nerve growth factor Bco12.